The chain runs to 904 residues: MVQVNENEYRLKFFLNNNYNRKICQVCQTPFWTKDKERNVCADIPCTDYYFFDLNIKSPPLTVREARQKFLKFFEKKGHTIIPPKPVLARWREDLYLTIASIVDFQPFVTSGIVPPPANPLVLSQPCIRLEDVDNVGVTFGRHLTTFEMAAHHAFNYPDKQIYWKDETVELSKEFFVEEIGIPEEELNYKESWWEGGGNAGPSFEVTVGGLELATLVFMQYEIKDGNYVPLKLKIVDTGYGVERIAWFTQKTPTAFHAIYGNLVYTFFNKIGAPLVDDELLKTAAILAGRIDPDKPETIKRHREEVAKKLGLDLKYVDQELTRAARVFQVLDHTKTIALMLADGLVPSNSGEGYLGRLLIRRALRVLRLLGSDIKLYELVKEQIEYWKEDFPQLLKNKDYILDVVNLEQERFNETLSKISLTASSLSRRKEISVDDLVKLYDSNGIPPDLLVEEIRKINPEIKVEVPYNFYGLVAKRHQTVPLKDTKKEKLPKDVIDLAENLPPTKKLYYEDQYKRSFTAKVVSVYKNYLVLDQTTFYPEGGGQIGDTGIIKDEKGNTYQVVDTQKVKDVIFHILDKEPSLKEGDEVYGEIDWQRRYRIMKHHTVTHVILSAARKVLGEHVWQAGAEKTPQKGRLDITHYKLPTEEEIKKIEDLANYIINDRRSVRPLIINRTEAEMKYGVSIYAGGVPEGADVRLIEIKDWDIEGCGGTHLSNTSEIGALKIINVEKIQDGVIRLEYVAGDVVAQYARQEEDKLKEISRQLSTSPEQIEVRLKRFLEEYKEKEELLNQYRKMMLQEIENISKKETVNGVTIYIINLFDEELRKEAMRKLTMNQKSIVVNISNKGNNNVVEIATSNDLRVDKIIEALRREGGKGGGKGTYGSITTQLNVDKIVNTIKSTINNGI.

The Zn(2+) site is built by histidine 603, histidine 607, cysteine 707, and histidine 711.

Belongs to the class-II aminoacyl-tRNA synthetase family. It depends on Zn(2+) as a cofactor.

The protein resides in the cytoplasm. It carries out the reaction tRNA(Ala) + L-alanine + ATP = L-alanyl-tRNA(Ala) + AMP + diphosphate. Catalyzes the attachment of alanine to tRNA(Ala) in a two-step reaction: alanine is first activated by ATP to form Ala-AMP and then transferred to the acceptor end of tRNA(Ala). Also edits incorrectly charged Ser-tRNA(Ala) and Gly-tRNA(Ala) via its editing domain. This is Alanine--tRNA ligase from Sulfurisphaera tokodaii (strain DSM 16993 / JCM 10545 / NBRC 100140 / 7) (Sulfolobus tokodaii).